A 198-amino-acid polypeptide reads, in one-letter code: Nascent polypeptide-associated complex subunit alpha (198 aa).

Positions 48-113 (ITRVVLKRTR…QAAAETGSVS (66 aa)) constitute an NAC-A/B domain. Residues 159 to 198 (LEDSDIKLVMEQANVSRNKAINGLKKNDSDVVNTIMDLCK) enclose the UBA domain.

This sequence belongs to the NAC-alpha family. As to quaternary structure, part of the nascent polypeptide-associated complex (NAC), consisting of EGD2 and EGD1. NAC associates with ribosomes via EGD1.

The protein localises to the cytoplasm. It localises to the nucleus. Functionally, component of the nascent polypeptide-associated complex (NAC), a dynamic component of the ribosomal exit tunnel, protecting the emerging polypeptides from interaction with other cytoplasmic proteins to ensure appropriate nascent protein targeting. The NAC complex also promotes mitochondrial protein import by enhancing productive ribosome interactions with the outer mitochondrial membrane and blocks the inappropriate interaction of ribosomes translating non-secretory nascent polypeptides with translocation sites in the membrane of the endoplasmic reticulum. EGD2 may also be involved in transcription regulation. In Yarrowia lipolytica (strain CLIB 122 / E 150) (Yeast), this protein is Nascent polypeptide-associated complex subunit alpha (EGD2).